We begin with the raw amino-acid sequence, 521 residues long: U4/U6 small nuclear ribonucleoprotein Prp4 (521 aa).

Position 26 is an N6-acetyllysine (Lys-26). 7 WD repeats span residues 228 to 267 (GDDRPISYCHFSPNSKMLATACWSGLCKLWSVPDCNLLHT), 270 to 317 (GHNT…PVAD), 320 to 359 (GHTVRVARVMWHPSGRFLGTTCYDRSWRLWDLEAQEEILH), 362 to 401 (GHSMGVYDIAFHQDGSLAGTGGLDAFGRVWDLRTGRCIMF), 404 to 443 (GHLKEIYGINFSPNGYHIATGSGDNTCKVWDLRQRRCVYT), 446 to 486 (AHQN…PLKT), and 489 to 521 (GHEGKVMGLDISSDGQLIATCSYDRTFKLWMAE).

Component of the precatalytic spliceosome (spliceosome B complex). Component of the U4/U6-U5 tri-snRNP complex, a building block of the precatalytic spliceosome (spliceosome B complex). The U4/U6-U5 tri-snRNP complex is composed of the U4, U6 and U5 snRNAs and at least PRPF3, PRPF4, PRPF6, PRPF8, PRPF31, SNRNP200, TXNL4A, SNRNP40, SNRPB, SNRPD1, SNRPD2, SNRPD3, SNRPE, SNRPF, SNRPG, DDX23, CD2BP2, PPIH, SNU13, EFTUD2, SART1 and USP39, plus LSM2, LSM3, LSM4, LSM5, LSM6, LSM7 and LSM8. Interacts directly with PRPF18, PPIH and PRPF3. Part of a heteromeric complex containing PPIH, PRPF3 and PRPF4 that is stable in the absence of RNA. Interacts with ERCC6.

It localises to the nucleus. It is found in the nucleus speckle. Functionally, plays a role in pre-mRNA splicing as component of the U4/U6-U5 tri-snRNP complex that is involved in spliceosome assembly, and as component of the precatalytic spliceosome (spliceosome B complex). The chain is U4/U6 small nuclear ribonucleoprotein Prp4 (PRPF4) from Pongo abelii (Sumatran orangutan).